The sequence spans 337 residues: Transaldolase (337 aa).

Residues 1–10 (MSSSPVKRQR) carry the Nuclear localization signal motif. Position 115 is an N6-acetyllysine (lysine 115). Residue lysine 142 is the Schiff-base intermediate with substrate of the active site. At lysine 219 the chain carries N6-acetyllysine. Serine 237 and serine 256 each carry phosphoserine. N6-acetyllysine occurs at positions 269, 286, and 321.

It belongs to the transaldolase family. Type 1 subfamily. In terms of assembly, homodimer. Heterodimer with isoform 2. Interacts with KPNA1 and KPNA4.

The protein resides in the nucleus. It is found in the cytoplasm. It catalyses the reaction D-sedoheptulose 7-phosphate + D-glyceraldehyde 3-phosphate = D-erythrose 4-phosphate + beta-D-fructose 6-phosphate. The protein operates within carbohydrate degradation; pentose phosphate pathway; D-glyceraldehyde 3-phosphate and beta-D-fructose 6-phosphate from D-ribose 5-phosphate and D-xylulose 5-phosphate (non-oxidative stage): step 2/3. Its function is as follows. Catalyzes the rate-limiting step of the non-oxidative phase in the pentose phosphate pathway. Catalyzes the reversible conversion of sedheptulose-7-phosphate and D-glyceraldehyde 3-phosphate into erythrose-4-phosphate and beta-D-fructose 6-phosphate. Not only acts as a pentose phosphate pathway enzyme, but also affects other metabolite pathways by altering its subcellular localization between the nucleus and the cytoplasm. The polypeptide is Transaldolase (Homo sapiens (Human)).